A 237-amino-acid polypeptide reads, in one-letter code: Bax inhibitor 1 (237 aa).

The Cytoplasmic portion of the chain corresponds to 1 to 29 (MNIFDRKINFDALLKFSHITPSTQQHLKK). Residue Lys7 forms a Glycyl lysine isopeptide (Lys-Gly) (interchain with G-Cter in ubiquitin) linkage. Residues 30 to 50 (VYASFALCMFVAAAGAYVHMV) traverse the membrane as a helical segment. Topologically, residues 51-52 (TH) are lumenal. The helical transmembrane segment at 53-73 (FIQAGLLSALGSLILMIWLMA) threads the bilayer. Over 74–86 (TPHSHETEQKRLG) the chain is Cytoplasmic. The helical transmembrane segment at 87–107 (LLAGFAFLTGVGLGPALEFCI) threads the bilayer. Over 108–112 (AVNPS) the chain is Lumenal. A helical membrane pass occupies residues 113–133 (ILPTAFMGTAMIFTCFTLSAL). Residues 134–139 (YARRRS) lie on the Cytoplasmic side of the membrane. The helical transmembrane segment at 140–160 (YLFLGGILMSALSLLLLSSLG) threads the bilayer. Residues 161 to 166 (NVFFGS) are Lumenal-facing. Residues 167–187 (IWLFQANLYVGLVVMCGFVLF) form a helical membrane-spanning segment. Over 188-206 (DTQLIIEKAEHGDQDYIWH) the chain is Cytoplasmic. The helical intramembrane region spans 207-227 (CIDLFLDFITVFRKLMMILAM). Residues 228 to 237 (NEKDKKKEKK) are Cytoplasmic-facing.

Belongs to the BI1 family. As to quaternary structure, interacts with BCL2 and BCL2L1. Interacts with ERN1. In terms of processing, ubiquitinated by BFAR, leading to proteasomal degradation. In terms of tissue distribution, highly abundant in testis.

The protein resides in the endoplasmic reticulum membrane. Functionally, endoplasmic reticulum (ER)-resident protein that confers cellular protection as an anti-apoptotic protein by limiting multiple stress-inducing pathways surrounding the endoplasmic reticulum and mitochondria. Inhibits the activities of the key sensor for the endoplasmic reticulum unfolded protein response IRE1alpha/ERN1 both directly and by blocking BAX/BAK binding. Modulates ER calcium homeostasis by acting as a calcium-leak channel. Negatively regulates autophagy and autophagosome formation, especially during periods of nutrient deprivation, and reduces cell survival during starvation. The sequence is that of Bax inhibitor 1 (TMBIM6) from Homo sapiens (Human).